Consider the following 128-residue polypeptide: Insoluble matrix shell protein 3 (128 aa).

The signal sequence occupies residues 1 to 19 (MLMLLCIIATVIPFSLVEG).

As to expression, component of the acid-insoluble organic matrix of the calcified shell.

The protein resides in the secreted. In Ruditapes philippinarum (Japanese carpet shell), this protein is Insoluble matrix shell protein 3.